Here is a 365-residue protein sequence, read N- to C-terminus: Ribosomal RNA large subunit methyltransferase M (365 aa).

S-adenosyl-L-methionine is bound by residues serine 194, 227-230 (CPGG), aspartate 246, aspartate 266, and aspartate 284. Lysine 313 (proton acceptor) is an active-site residue.

This sequence belongs to the class I-like SAM-binding methyltransferase superfamily. RNA methyltransferase RlmE family. RlmM subfamily. Monomer.

The protein localises to the cytoplasm. It catalyses the reaction cytidine(2498) in 23S rRNA + S-adenosyl-L-methionine = 2'-O-methylcytidine(2498) in 23S rRNA + S-adenosyl-L-homocysteine + H(+). In terms of biological role, catalyzes the 2'-O-methylation at nucleotide C2498 in 23S rRNA. The polypeptide is Ribosomal RNA large subunit methyltransferase M (Pasteurella multocida (strain Pm70)).